The primary structure comprises 369 residues: Leucine-specific-binding protein (369 aa).

Positions 1 to 23 (MKRKAKTIIAGIVALAVSQGAMA) are cleaved as a signal peptide. An intrachain disulfide couples C76 to C101.

This sequence belongs to the leucine-binding protein family.

It localises to the periplasm. Its function is as follows. This protein is a component of the leucine-specific transport system, which is one of the two periplasmic binding protein-dependent transport systems of the high-affinity transport of the branched-chain amino acids. The chain is Leucine-specific-binding protein (livK) from Salmonella typhi.